The primary structure comprises 261 residues: Histone H3-like centromeric protein cpar-1 (261 aa).

Positions 80–150 (TVGSNSTNLV…AGSSSSDRVR (71 aa)) are disordered. A compositionally biased stretch (polar residues) spans 113–127 (AANSHHQSPINVGNR). Positions 132-146 (GTNGRNGSRAGSSSS) are enriched in low complexity. Residues 164 to 261 (YRPGQKALEE…LYRRLCLPNL (98 aa)) form an H3-like region.

Belongs to the histone H3 family. In terms of assembly, forms a nucleosome-like histone octamer containing two molecules each of H2A, H2B, cpar-1 and H4 assembled in one cpar-1-H4 heterotetramer and two H2A-H2B heterodimers. In terms of processing, cleaved at the onset of meiotic anaphase I, likely by separase sep-1.

It is found in the nucleus. Its subcellular location is the chromosome. Histone H3-like variant which exclusively replaces conventional H3 in the nucleosome core of centromeric chromatin at the inner plate of the kinetochore. Required for recruitment and assembly of kinetochore proteins, mitotic progression and chromosome segregation. May serve as an epigenetic mark that propagates centromere identity through replication and cell division. Not required for chromosome segregation during meiosis. The protein is Histone H3-like centromeric protein cpar-1 of Caenorhabditis elegans.